The primary structure comprises 224 residues: Lipoprotein-releasing system ATP-binding protein LolD (224 aa).

In terms of domain architecture, ABC transporter spans 5–224 (LEILDVSKCY…SLSGGMLTEL (220 aa)). 40–47 (GSSGSGKS) lines the ATP pocket.

It belongs to the ABC transporter superfamily. Lipoprotein translocase (TC 3.A.1.125) family. As to quaternary structure, the complex is composed of two ATP-binding proteins (LolD) and two transmembrane proteins (LolC and LolE).

The protein resides in the cell inner membrane. In terms of biological role, part of the ABC transporter complex LolCDE involved in the translocation of mature outer membrane-directed lipoproteins, from the inner membrane to the periplasmic chaperone, LolA. Responsible for the formation of the LolA-lipoprotein complex in an ATP-dependent manner. The sequence is that of Lipoprotein-releasing system ATP-binding protein LolD from Anaplasma marginale (strain St. Maries).